A 272-amino-acid chain; its full sequence is HMP-PP phosphatase (272 aa).

The active-site Nucleophile is aspartate 8. Mg(2+) is bound by residues aspartate 8, aspartate 10, and aspartate 212.

Belongs to the HAD-like hydrolase superfamily. Cof family. Mg(2+) is required as a cofactor.

The catalysed reaction is 4-amino-2-methyl-5-(diphosphooxymethyl)pyrimidine + H2O = 4-amino-2-methyl-5-(phosphooxymethyl)pyrimidine + phosphate + H(+). In terms of biological role, catalyzes the hydrolysis of 4-amino-2-methyl-5-hydroxymethylpyrimidine pyrophosphate (HMP-PP) to 4-amino-2-methyl-5-hydroxymethylpyrimidine phosphate (HMP-P). This chain is HMP-PP phosphatase, found in Escherichia coli (strain 55989 / EAEC).